Consider the following 950-residue polypeptide: Protein translocase subunit SecA 1 (950 aa).

ATP-binding positions include Gln-83, 101 to 105 (GEGKT), and Asp-490. A disordered region spans residues 864 to 950 (EGGAGRKNAA…AKPPKSVKKR (87 aa)). Over residues 873 to 888 (AAREEAPSRLRAKGIE) the composition is skewed to basic and acidic residues.

It belongs to the SecA family. In terms of assembly, monomer and homodimer. Part of the essential Sec protein translocation apparatus which comprises SecA, SecYEG and auxiliary proteins SecDF. Other proteins may also be involved.

Its subcellular location is the cell membrane. It is found in the cytoplasm. It catalyses the reaction ATP + H2O + cellular proteinSide 1 = ADP + phosphate + cellular proteinSide 2.. Functionally, part of the Sec protein translocase complex. Interacts with the SecYEG preprotein conducting channel. Has a central role in coupling the hydrolysis of ATP to the transfer of proteins into and across the cell membrane, serving as an ATP-driven molecular motor driving the stepwise translocation of polypeptide chains across the membrane. The sequence is that of Protein translocase subunit SecA 1 from Mycobacterium ulcerans (strain Agy99).